The primary structure comprises 158 residues: MTLALALYEPDIAQNAGTLARAVACLGLELHIVEPAGFPVGDAGFRRAGMDYLDRAVIRRHASFKAFEEWRRAEGRRLVLATTRGAVAHVDFAFTETDVVLLGRESAGVPEAVHESADARIVIPLNEGARSLNVALAGAMILGEALRQTGGFARTGTG.

Residues G103, I123, and S131 each coordinate S-adenosyl-L-methionine.

This sequence belongs to the class IV-like SAM-binding methyltransferase superfamily. RNA methyltransferase TrmH family. TrmL subfamily. Homodimer.

Its subcellular location is the cytoplasm. The enzyme catalyses cytidine(34) in tRNA + S-adenosyl-L-methionine = 2'-O-methylcytidine(34) in tRNA + S-adenosyl-L-homocysteine + H(+). The catalysed reaction is 5-carboxymethylaminomethyluridine(34) in tRNA(Leu) + S-adenosyl-L-methionine = 5-carboxymethylaminomethyl-2'-O-methyluridine(34) in tRNA(Leu) + S-adenosyl-L-homocysteine + H(+). Functionally, methylates the ribose at the nucleotide 34 wobble position in the two leucyl isoacceptors tRNA(Leu)(CmAA) and tRNA(Leu)(cmnm5UmAA). Catalyzes the methyl transfer from S-adenosyl-L-methionine to the 2'-OH of the wobble nucleotide. The protein is tRNA (cytidine(34)-2'-O)-methyltransferase of Ancylobacter novellus (strain ATCC 8093 / DSM 506 / JCM 20403 / CCM 1077 / IAM 12100 / NBRC 12443 / NCIMB 10456) (Starkeya novella).